A 134-amino-acid polypeptide reads, in one-letter code: UPF0715 membrane protein YoaG (134 aa).

A run of 4 helical transmembrane segments spans residues 9–29 (LMTL…YSFV), 35–55 (IIAL…YGLF), 72–92 (VMYL…FFVI), and 106–126 (FYYM…SLIL).

The protein belongs to the UPF0715 family.

The protein localises to the cell membrane. This chain is UPF0715 membrane protein YoaG (yoaG), found in Bacillus subtilis (strain 168).